The sequence spans 251 residues: Probable transcriptional regulatory protein DET0444 (251 aa).

Belongs to the TACO1 family.

It localises to the cytoplasm. This Dehalococcoides mccartyi (strain ATCC BAA-2266 / KCTC 15142 / 195) (Dehalococcoides ethenogenes (strain 195)) protein is Probable transcriptional regulatory protein DET0444.